The sequence spans 336 residues: Vacuolar protein sorting-associated protein 26B (336 aa).

A phosphoserine mark is found at Ser-302, Ser-304, and Ser-319.

This sequence belongs to the VPS26 family. As to quaternary structure, component of the heterotrimeric retromer cargo-selective complex (CSC), also described as vacuolar protein sorting subcomplex (VPS), formed by VPS26 (VPS26A or VPS26B), VPS29 and VPS35. The CSC has a highly elongated structure with VPS26 and VPS29 binding independently at opposite distal ends of VPS35 as central platform. The CSC is believed to associate with variable sorting nexins to form functionally distinct retromer complex variants. The originally described SNX-BAR retromer is a pentamer containing the CSC and a heterodimeric membrane-deforming subcomplex formed between SNX1 or SNX2 and SNX5 or SNX6 (also called SNX-BAR subcomplex); the respective CSC and SNX-BAR subcomplexes associate with low affinity. The CSC associates with SNX3 to form a SNX3-retromer complex. The CSC associates with SNX27, the WASH complex and the SNX-BAR subcomplex to form the SNX27-retromer complex. Interacts with VPS29, VPS35, TBC1D5, GOLPH3, SNX27.

It is found in the cytoplasm. The protein resides in the membrane. It localises to the early endosome. The protein localises to the late endosome. In terms of biological role, acts as a component of the retromer cargo-selective complex (CSC). The CSC is believed to be the core functional component of retromer or respective retromer complex variants acting to prevent missorting of selected transmembrane cargo proteins into the lysosomal degradation pathway. The recruitment of the CSC to the endosomal membrane involves RAB7A and SNX3. The SNX-BAR retromer mediates retrograde transport of cargo proteins from endosomes to the trans-Golgi network (TGN) and is involved in endosome-to-plasma membrane transport for cargo protein recycling. The SNX3-retromer mediates the retrograde transport of WLS distinct from the SNX-BAR retromer pathway. The SNX27-retromer is believed to be involved in endosome-to-plasma membrane trafficking and recycling of a broad spectrum of cargo proteins. The CSC seems to act as recruitment hub for other proteins, such as the WASH complex and TBC1D5. May be involved in retrograde transport of SORT1 but not of IGF2R. Acts redundantly with VSP26A in SNX-27 mediated endocytic recycling of SLC2A1/GLUT1. The protein is Vacuolar protein sorting-associated protein 26B (VPS26B) of Pongo abelii (Sumatran orangutan).